The sequence spans 241 residues: Carboxy-S-adenosyl-L-methionine synthase (241 aa).

S-adenosyl-L-methionine contacts are provided by residues Tyr38, 63–65 (GCS), 88–89 (DN), 116–117 (DI), Asn131, and Arg198.

This sequence belongs to the class I-like SAM-binding methyltransferase superfamily. Cx-SAM synthase family. Homodimer.

The catalysed reaction is prephenate + S-adenosyl-L-methionine = carboxy-S-adenosyl-L-methionine + 3-phenylpyruvate + H2O. In terms of biological role, catalyzes the conversion of S-adenosyl-L-methionine (SAM) to carboxy-S-adenosyl-L-methionine (Cx-SAM). The chain is Carboxy-S-adenosyl-L-methionine synthase from Histophilus somni (strain 2336) (Haemophilus somnus).